The chain runs to 1482 residues: Cystic fibrosis transmembrane conductance regulator (1482 aa).

At 1 to 77 (MQRSPLEKAS…KLINALRRCF (77 aa)) the chain is on the cytoplasmic side. Residues 78 to 98 (FWRFMFYGILLYLGEVTKAVQ) form a helical membrane-spanning segment. An ABC transmembrane type-1 1 domain is found at 81-365 (FMFYGILLYL…WAVQTWYDSL (285 aa)). Residues 99–122 (PLLLGRIIASYDPDNKVERSIAIY) lie on the Extracellular side of the membrane. Residues 123–146 (LGIGLCLLFIVRTLLLHPAIFGLH) form a helical membrane-spanning segment. Topologically, residues 147–195 (HIGMQMRIAMFSLIYKKILKLSSRVLDKISIGQLVSLLSNNLNKFDEGL) are cytoplasmic. Residues 196-216 (ALAHFVWIAPLQVTLLMGLLW) traverse the membrane as a helical segment. The Extracellular portion of the chain corresponds to 217-222 (ELLQAS). A helical membrane pass occupies residues 223–243 (AFCGLGFLIVLALVQAGLGRM). Residues 244–298 (MMKYRDQRAGKINERLVITSEMIENIQSVKAYCWEEAMEKMIENLRQTELKLTRK) are Cytoplasmic-facing. The helical transmembrane segment at 299–319 (AAYVRYFNSSAFFFSGFFVVF) threads the bilayer. The Extracellular portion of the chain corresponds to 320-339 (LSVLPYALIKGIILRKIFTT). A helical transmembrane segment spans residues 340-358 (ISFCIVLRMAVTRQFPWAV). The Cytoplasmic segment spans residues 359-859 (QTWYDSLGAI…YLRYLAVNKS (501 aa)). ATP contacts are provided by residues W401, 458–465 (GSTGAGKT), and Q493. Residues 423-646 (NGDNSLFFSN…RPDFSSKLMG (224 aa)) form the ABC transporter 1 domain. C524 carries S-palmitoyl cysteine lipidation. S549 and S660 each carry phosphoserine. The segment at 654–832 (SAERRNSILT…EEINEEYLKE (179 aa)) is disordered R region. S670 carries the post-translational modification Phosphoserine; by PKA. S686 bears the Phosphoserine mark. K688 is covalently cross-linked (Glycyl lysine isopeptide (Lys-Gly) (interchain with G-Cter in ubiquitin)). S700 and S712 each carry phosphoserine. T717 carries the post-translational modification Phosphothreonine. S738, S769, S791, S796, and S814 each carry phosphoserine. A helical transmembrane segment spans residues 860–880 (LSLVLIWCLVIFLAEVAISLA). In terms of domain architecture, ABC transmembrane type-1 2 spans 860–1156 (LSLVLIWCLV…AVNSSIDVDS (297 aa)). Residues 881-919 (VLLLLDKSPRYSKGNGTASGNGSSAVIITSTSSYYLFYI) lie on the Extracellular side of the membrane. N-linked (GlcNAc...) asparagine glycans are attached at residues N895 and N901. Residues 920 to 940 (YVGVADTLLALGFFRGLPLVH) traverse the membrane as a discontinuously helical segment. At 941-991 (TLITVSKILHHRMLHSVLRAPMSTLNMLKAGGILNRFSKDIAILDDLLPLT) the chain is on the cytoplasmic side. A helical membrane pass occupies residues 992 to 1012 (IFDFVQLLLIVIGAVAVVSVL). The Extracellular portion of the chain corresponds to 1013-1014 (QP). The chain crosses the membrane as a helical span at residues 1015 to 1035 (YIFLATVPVIAAFVILRGYFL). The Cytoplasmic segment spans residues 1036–1096 (HTSQQLKQLE…TANWFLYLST (61 aa)). The chain crosses the membrane as a helical span at residues 1097–1117 (LRWFQMRIEMIFVVFFIAVTF). Residues 1118–1131 (ISILTTGEGEGTVG) lie on the Extracellular side of the membrane. A helical transmembrane segment spans residues 1132-1152 (IILTLAMNIMGTLQWAVNSSI). The Cytoplasmic portion of the chain corresponds to 1153-1482 (DVDSLMRSVS…TEEEVQETRL (330 aa)). Residues 1212 to 1445 (MTVKDLTARY…KSLFRQAISP (234 aa)) enclose the ABC transporter 2 domain. Residues Y1221 and 1246–1253 (GRTGAGKS) contribute to the ATP site. The tract at residues 1388 to 1482 (RTLKQAFADC…TEEEVQETRL (95 aa)) is interaction with GORASP2. Residue C1397 is the site of S-palmitoyl cysteine attachment. Phosphoserine occurs at positions 1446 and 1458. The disordered stretch occupies residues 1450–1482 (KLFPRRNSSKHKSRSPITALKEETEEEVQETRL). Residues 1451–1463 (LFPRRNSSKHKSR) show a composition bias toward basic residues. The span at 1472–1482 (ETEEEVQETRL) shows a compositional bias: acidic residues. A PDZ-binding motif is present at residues 1480 to 1482 (TRL).

It belongs to the ABC transporter superfamily. ABCC family. CFTR transporter (TC 3.A.1.202) subfamily. Monomer; does not require oligomerization for channel activity. May form oligomers in the membrane. Interacts with SLC26A3, SLC26A6 and NHERF1. Interacts with SHANK2. Interacts with MYO6. Interacts (via C-terminus) with GOPC (via PDZ domain); this promotes CFTR internalization and thereby decreases channel activity. Interacts with SLC4A7 through NHERF1. Found in a complex with MYO5B and RAB11A. Interacts with ANO1. Interacts with SLC26A8. Interacts with AHCYL1; the interaction increases CFTR activity. Interacts with CSE1L. The core-glycosylated form interacts with GORASP2 (via PDZ GRASP-type 1 domain) in respone to ER stress. Interacts with MARCHF2; the interaction leads to CFTR ubiqtuitination and degradation. Interacts with ADGRG2. Post-translationally, N-glycosylated. Phosphorylated; cAMP treatment promotes phosphorylation and activates the channel. Dephosphorylation decreases the ATPase activity (in vitro). Phosphorylation at PKA sites activates the channel. Phosphorylation at PKC sites enhances the response to phosphorylation by PKA. Phosphorylated by AMPK; this inhibits channel activity. In terms of processing, ubiquitinated, leading to its degradation in the lysosome. Deubiquitination by USP10 in early endosomes enhances its endocytic recycling to the cell membrane. Ubiquitinated by RNF185 during ER stress. Ubiquitinated by MARCHF2.

The protein resides in the apical cell membrane. It is found in the early endosome membrane. The protein localises to the cell membrane. It localises to the recycling endosome membrane. Its subcellular location is the endoplasmic reticulum membrane. The protein resides in the nucleus. The enzyme catalyses ATP + H2O + closed Cl(-) channel = ADP + phosphate + open Cl(-) channel.. The catalysed reaction is chloride(in) = chloride(out). It catalyses the reaction hydrogencarbonate(in) = hydrogencarbonate(out). It carries out the reaction ATP + H2O = ADP + phosphate + H(+). Epithelial ion channel that plays an important role in the regulation of epithelial ion and water transport and fluid homeostasis. Mediates the transport of chloride ions across the cell membrane. Possesses an intrinsic ATPase activity and utilizes ATP to gate its channel; the passive flow of anions through the channel is gated by cycles of ATP binding and hydrolysis by the ATP-binding domains. The ion channel is also permeable to HCO(3)(-); selectivity depends on the extracellular chloride concentration. Exerts its function also by modulating the activity of other ion channels and transporters. Contributes to the regulation of the pH and the ion content of the epithelial fluid layer. Modulates the activity of the epithelial sodium channel (ENaC) complex, in part by regulating the cell surface expression of the ENaC complex. May regulate bicarbonate secretion and salvage in epithelial cells by regulating the transporter SLC4A7. Can inhibit the chloride channel activity of ANO1. Plays a role in the chloride and bicarbonate homeostasis during sperm epididymal maturation and capacitation. In Otolemur garnettii (Small-eared galago), this protein is Cystic fibrosis transmembrane conductance regulator.